The chain runs to 171 residues: Antimicrobial protein CAP18 (171 aa).

Positions 1 to 29 (METHKHGPSLAWWSLLLLLLGLLMPPAIA) are cleaved as a signal peptide. Intrachain disulfides connect C85/C96 and C107/C124.

It belongs to the cathelicidin family. Neutrophils.

It is found in the secreted. In terms of biological role, CAP18 binds to the lipid A moiety of bacterial lipopolysaccharides (LPS), a glycolipid present in the outer membrane of all Gram-negative bacteria. Has antibiotic activity. The protein is Antimicrobial protein CAP18 (CAP18) of Oryctolagus cuniculus (Rabbit).